Reading from the N-terminus, the 95-residue chain is MLKSNNASKTATCKVGDKAAKKVFFRRRKGCPLSVPNAPVIDYKNPELLIKFVSEGGRMLPSRITNVCAKKQRKLNNAIKIARILALLPFVFQAK.

It belongs to the bacterial ribosomal protein bS18 family. In terms of assembly, part of the 30S ribosomal subunit. Forms a tight heterodimer with protein bS6.

Binds as a heterodimer with protein bS6 to the central domain of the 16S rRNA, where it helps stabilize the platform of the 30S subunit. This chain is Small ribosomal subunit protein bS18, found in Rickettsia typhi (strain ATCC VR-144 / Wilmington).